The sequence spans 185 residues: uncharacterized protein (185 aa).

The next 5 helical transmembrane spans lie at threonine 4–isoleucine 24, leucine 54–isoleucine 74, leucine 98–asparagine 118, valine 119–tyrosine 139, and phenylalanine 153–isoleucine 173.

It localises to the cell membrane. This is an uncharacterized protein from Bacillus subtilis (strain 168).